We begin with the raw amino-acid sequence, 630 residues long: Auxin efflux carrier component 2 (630 aa).

At 1–6 (MITGRD) the chain is on the extracellular side. The chain crosses the membrane as a helical span at residues 7–27 (IYDVLAAIVPLYVAMFLAYGS). Over 28–38 (VRWWGIFTPDQ) the chain is Cytoplasmic. A helical membrane pass occupies residues 39 to 59 (CSGINRFVAVFAVPLLSFHFI). A (indol-3-yl)acetate-binding site is contributed by V51. Topologically, residues 60–70 (STNDPYSMNYR) are extracellular. The chain crosses the membrane as a helical span at residues 71–91 (FLAADSLQKLVILAALAVWHN). Residues 92–108 (LLSRYRRNGGAAASLDW) are Cytoplasmic-facing. A helical transmembrane segment spans residues 109 to 129 (TITLFSLSTLPNTLVMGIPLL). Positions 120 and 122 each coordinate (indol-3-yl)acetate. Residues 130–139 (RAMYGDFSGS) are Extracellular-facing. Residues 140-160 (LMVQIVVLQSVIWYTLMLFLF) form a helical membrane-spanning segment. (indol-3-yl)acetate is bound at residue Y153. The Cytoplasmic portion of the chain corresponds to 161 to 490 (EYRGAKALIS…LIRNPNTYSS (330 aa)). The segment at 317–350 (ASGKAADPPSYPAPNPGMMPAPRKKELGGSNSNS) is disordered. Residues 325 to 335 (PSYPAPNPGMM) are compositionally biased toward pro residues. A helical transmembrane segment spans residues 491–511 (LIGLVWSLVSFRWNIQMPSII). At 512 to 514 (KGS) the chain is on the extracellular side. The helical transmembrane segment at 515 to 535 (ISILSDAGLGMAMFSLGLFMA) threads the bilayer. Over 536-549 (LQPKIISCGKTVAT) the chain is Cytoplasmic. The helical transmembrane segment at 550-570 (FAMAVRFLTGPAVIAATSIAI) threads the bilayer. The Extracellular segment spans residues 571–574 (GLRG). The chain crosses the membrane as a helical span at residues 575 to 595 (VLLHVAIVQAALPQGIVPFVF). (indol-3-yl)acetate contacts are provided by I590 and V591. The Cytoplasmic segment spans residues 596–609 (AKEYNCHPQILSTA). Residues 610 to 630 (VIFGMLIALPITILYYVLLGI) form a helical membrane-spanning segment.

The protein belongs to the auxin efflux carrier (TC 2.A.69.1) family. In terms of assembly, homodimer. Expressed in roots, leaves, shoot apex and panicles. Expressed in roots, stem bases and young panicles.

It localises to the membrane. Its function is as follows. Acts as a component of the auxin efflux carrier. Involved in the basipetal polar auxin transport which contributes to the spreading growth of the tillers. The chain is Auxin efflux carrier component 2 from Oryza sativa subsp. japonica (Rice).